The following is a 291-amino-acid chain: ATP synthase gamma chain (291 aa).

The protein belongs to the ATPase gamma chain family. F-type ATPases have 2 components, CF(1) - the catalytic core - and CF(0) - the membrane proton channel. CF(1) has five subunits: alpha(3), beta(3), gamma(1), delta(1), epsilon(1). CF(0) has three main subunits: a, b and c.

It is found in the cell inner membrane. Functionally, produces ATP from ADP in the presence of a proton gradient across the membrane. The gamma chain is believed to be important in regulating ATPase activity and the flow of protons through the CF(0) complex. This Sinorhizobium medicae (strain WSM419) (Ensifer medicae) protein is ATP synthase gamma chain.